A 590-amino-acid polypeptide reads, in one-letter code: Aspartate--tRNA(Asp/Asn) ligase (590 aa).

Glu-175 contacts L-aspartate. Positions 199-202 (QQYK) are aspartate. L-aspartate contacts are provided by Arg-221 and His-450. Residue 221-223 (RDE) participates in ATP binding. Glu-484 is an ATP binding site. Arg-491 contacts L-aspartate. 536–539 (GVDR) is a binding site for ATP.

Belongs to the class-II aminoacyl-tRNA synthetase family. Type 1 subfamily. Homodimer.

The protein resides in the cytoplasm. The enzyme catalyses tRNA(Asx) + L-aspartate + ATP = L-aspartyl-tRNA(Asx) + AMP + diphosphate. Functionally, aspartyl-tRNA synthetase with relaxed tRNA specificity since it is able to aspartylate not only its cognate tRNA(Asp) but also tRNA(Asn). Reaction proceeds in two steps: L-aspartate is first activated by ATP to form Asp-AMP and then transferred to the acceptor end of tRNA(Asp/Asn). This Bradyrhizobium sp. (strain ORS 278) protein is Aspartate--tRNA(Asp/Asn) ligase.